The primary structure comprises 430 residues: Enolase (430 aa).

Gln-167 provides a ligand contact to (2R)-2-phosphoglycerate. Catalysis depends on Glu-209, which acts as the Proton donor. 3 residues coordinate Mg(2+): Asp-246, Glu-289, and Asp-316. 4 residues coordinate (2R)-2-phosphoglycerate: Lys-341, Arg-370, Ser-371, and Lys-392. Lys-341 functions as the Proton acceptor in the catalytic mechanism.

Belongs to the enolase family. In terms of assembly, component of the RNA degradosome, a multiprotein complex involved in RNA processing and mRNA degradation. Mg(2+) serves as cofactor.

The protein resides in the cytoplasm. Its subcellular location is the secreted. The protein localises to the cell surface. The catalysed reaction is (2R)-2-phosphoglycerate = phosphoenolpyruvate + H2O. It functions in the pathway carbohydrate degradation; glycolysis; pyruvate from D-glyceraldehyde 3-phosphate: step 4/5. Catalyzes the reversible conversion of 2-phosphoglycerate (2-PG) into phosphoenolpyruvate (PEP). It is essential for the degradation of carbohydrates via glycolysis. The polypeptide is Enolase (Alteromonas mediterranea (strain DSM 17117 / CIP 110805 / LMG 28347 / Deep ecotype)).